Reading from the N-terminus, the 296-residue chain is Phosphatidylglycerol--prolipoprotein diacylglyceryl transferase (296 aa).

4 consecutive transmembrane segments (helical) span residues 10-30 (IAFSLGPVQVHWYGLMYLAAF), 57-77 (LLFYGMLGVVLGGRIGYMLFY), 92-112 (VWEGGMSFHGGLLGVLIACGL), and 119-139 (LHFFDVMDFVAPLVPLGLGFG). R140 provides a ligand contact to a 1,2-diacyl-sn-glycero-3-phospho-(1'-sn-glycerol). 3 helical membrane-spanning segments follow: residues 194 to 214 (QLYEAALEGVVMFVVLWTFSM), 220 to 240 (YAVSGLFALLYGVFRFIVEFV), and 255 to 275 (LTMGQILSLPLIGVGLVLLAL).

The protein belongs to the Lgt family.

It localises to the cell inner membrane. The enzyme catalyses L-cysteinyl-[prolipoprotein] + a 1,2-diacyl-sn-glycero-3-phospho-(1'-sn-glycerol) = an S-1,2-diacyl-sn-glyceryl-L-cysteinyl-[prolipoprotein] + sn-glycerol 1-phosphate + H(+). Its pathway is protein modification; lipoprotein biosynthesis (diacylglyceryl transfer). Its function is as follows. Catalyzes the transfer of the diacylglyceryl group from phosphatidylglycerol to the sulfhydryl group of the N-terminal cysteine of a prolipoprotein, the first step in the formation of mature lipoproteins. The polypeptide is Phosphatidylglycerol--prolipoprotein diacylglyceryl transferase (Xanthomonas campestris pv. campestris (strain 8004)).